Reading from the N-terminus, the 389-residue chain is uncharacterized protein (389 aa).

An N-terminal signal peptide occupies residues M1–A29.

The protein belongs to the bacterial solute-binding protein 1 family. WtpA subfamily.

This is an uncharacterized protein from Thermoplasma volcanium (strain ATCC 51530 / DSM 4299 / JCM 9571 / NBRC 15438 / GSS1).